Consider the following 233-residue polypeptide: Ribonuclease 3 (233 aa).

The 130-residue stretch at 7-136 folds into the RNase III domain; it reads KQYLLSEFNI…FIGALYLDQG (130 aa). A Mg(2+)-binding site is contributed by Glu49. Asp53 is an active-site residue. 2 residues coordinate Mg(2+): Asp122 and Glu125. Glu125 is a catalytic residue. In terms of domain architecture, DRBM spans 162-232; the sequence is DFKSRLQEKL…ARAALKLLEE (71 aa).

This sequence belongs to the ribonuclease III family. In terms of assembly, homodimer. Mg(2+) is required as a cofactor.

The protein resides in the cytoplasm. The catalysed reaction is Endonucleolytic cleavage to 5'-phosphomonoester.. Functionally, digests double-stranded RNA. Involved in the processing of primary rRNA transcript to yield the immediate precursors to the large and small rRNAs (23S and 16S). Processes some mRNAs, and tRNAs when they are encoded in the rRNA operon. Processes pre-crRNA and tracrRNA of type II CRISPR loci if present in the organism. The polypeptide is Ribonuclease 3 (Leuconostoc citreum (strain KM20)).